A 350-amino-acid polypeptide reads, in one-letter code: Biotin synthase (350 aa).

The Radical SAM core domain maps to 54–278 (REIQLSTLLS…TMPQSYVRLS (225 aa)). [4Fe-4S] cluster contacts are provided by C69, C73, and C76. [2Fe-2S] cluster-binding residues include C113, C144, C204, and R276.

Belongs to the radical SAM superfamily. Biotin synthase family. As to quaternary structure, homodimer. It depends on [4Fe-4S] cluster as a cofactor. [2Fe-2S] cluster is required as a cofactor.

It carries out the reaction (4R,5S)-dethiobiotin + (sulfur carrier)-SH + 2 reduced [2Fe-2S]-[ferredoxin] + 2 S-adenosyl-L-methionine = (sulfur carrier)-H + biotin + 2 5'-deoxyadenosine + 2 L-methionine + 2 oxidized [2Fe-2S]-[ferredoxin]. Its pathway is cofactor biosynthesis; biotin biosynthesis; biotin from 7,8-diaminononanoate: step 2/2. Functionally, catalyzes the conversion of dethiobiotin (DTB) to biotin by the insertion of a sulfur atom into dethiobiotin via a radical-based mechanism. This chain is Biotin synthase, found in Neisseria meningitidis serogroup C (strain 053442).